The chain runs to 461 residues: Fumarate hydratase class II (461 aa).

Substrate is bound by residues Ser97–Thr99, His127–Asp130, Ser137–Asn139, and Thr185. The active-site Proton donor/acceptor is the His186. The active site involves Ser316. Substrate-binding positions include Ser317 and Lys322 to Asn324.

Belongs to the class-II fumarase/aspartase family. Fumarase subfamily. As to quaternary structure, homotetramer.

Its subcellular location is the cytoplasm. The catalysed reaction is (S)-malate = fumarate + H2O. The protein operates within carbohydrate metabolism; tricarboxylic acid cycle; (S)-malate from fumarate: step 1/1. Functionally, involved in the TCA cycle. Catalyzes the stereospecific interconversion of fumarate to L-malate. This is Fumarate hydratase class II from Staphylococcus aureus (strain MRSA252).